Here is a 762-residue protein sequence, read N- to C-terminus: Transcription factor kpeA (762 aa).

The tract at residues 267–361 (FDHTSHGSQS…PLKPDQRKQA (95 aa)) is disordered. Residues 294–312 (KKPSSPTRSTGSSSSTSPP) are compositionally biased toward low complexity. A DNA-binding region (zn(2)-C6 fungal-type) is located at residues 370–401 (CLRCKFLKKTCDKGEPCAGCQPSHARLWQVPC).

The protein localises to the nucleus. Its function is as follows. Transcription factor that regulates conidiation as well as kojic acid production, likely by negatively controlling kojR and kojA expression. This Aspergillus oryzae (strain ATCC 42149 / RIB 40) (Yellow koji mold) protein is Transcription factor kpeA.